The following is a 93-amino-acid chain: Small ribosomal subunit protein bS6 (93 aa).

The protein belongs to the bacterial ribosomal protein bS6 family.

In terms of biological role, binds together with bS18 to 16S ribosomal RNA. The chain is Small ribosomal subunit protein bS6 (rpsF) from Treponema pallidum (strain Nichols).